A 363-amino-acid chain; its full sequence is Molybdenum import ATP-binding protein ModC (363 aa).

One can recognise an ABC transporter domain in the interval methionine 1–tyrosine 232. Glycine 30–threonine 37 lines the ATP pocket. One can recognise a Mop domain in the interval arginine 292–aspartate 358.

The protein belongs to the ABC transporter superfamily. Molybdate importer (TC 3.A.1.8) family. The complex is composed of two ATP-binding proteins (ModC), two transmembrane proteins (ModB) and a solute-binding protein (ModA).

It localises to the cell inner membrane. The catalysed reaction is molybdate(out) + ATP + H2O = molybdate(in) + ADP + phosphate + H(+). In terms of biological role, part of the ABC transporter complex ModABC involved in molybdenum import. Responsible for energy coupling to the transport system. This Paramagnetospirillum magneticum (strain ATCC 700264 / AMB-1) (Magnetospirillum magneticum) protein is Molybdenum import ATP-binding protein ModC.